The following is a 634-amino-acid chain: uncharacterized protein (634 aa).

Residues 1-40 form the signal peptide; sequence MWLQQRLKGLPGLLSSSWARRLLCLLGLLVLLLWFASSGA. The Extracellular portion of the chain corresponds to 41-589; the sequence is RRAAGGLHLP…DEHMAQQDPG (549 aa). Asparagine 363 carries N-linked (GlcNAc...) asparagine glycosylation. Residues 590–610 form a helical membrane-spanning segment; it reads LPFLFWFSVASLITLFHLFLF. Over 611 to 634 the chain is Cytoplasmic; that stretch reads KLIYNEYCGPGAKPLFRSKEDPSV.

The protein resides in the membrane. This is an uncharacterized protein from Mus musculus (Mouse).